Reading from the N-terminus, the 59-residue chain is UPF0181 protein YoaH (59 aa).

It belongs to the UPF0181 family.

The polypeptide is UPF0181 protein YoaH (Escherichia coli O127:H6 (strain E2348/69 / EPEC)).